A 442-amino-acid polypeptide reads, in one-letter code: Histidine--tRNA ligase (442 aa).

The protein belongs to the class-II aminoacyl-tRNA synthetase family. As to quaternary structure, homodimer.

Its subcellular location is the cytoplasm. It catalyses the reaction tRNA(His) + L-histidine + ATP = L-histidyl-tRNA(His) + AMP + diphosphate + H(+). The sequence is that of Histidine--tRNA ligase (hisS) from Helicobacter pylori (strain ATCC 700392 / 26695) (Campylobacter pylori).